The following is a 184-amino-acid chain: Endoribonuclease YbeY (184 aa).

Composition is skewed to acidic residues over residues 1–11 (MTVEVGADENP) and 19–29 (DGAGDESDDED). The tract at residues 1-38 (MTVEVGADENPDFAHDETDGAGDESDDEDAQGRDPELD) is disordered. Zn(2+) is bound by residues H146, H150, and H156.

This sequence belongs to the endoribonuclease YbeY family. Zn(2+) is required as a cofactor.

It localises to the cytoplasm. Functionally, single strand-specific metallo-endoribonuclease involved in late-stage 70S ribosome quality control and in maturation of the 3' terminus of the 16S rRNA. In Burkholderia pseudomallei (strain K96243), this protein is Endoribonuclease YbeY.